The chain runs to 396 residues: (S)-8-oxocitronellyl enol synthase ISY2 (396 aa).

Residues 38-40 (TGL), 66-67 (RR), 84-85 (DV), 108-109 (TW), Gln146, Tyr182, Ile209, and 216-218 (SMM) contribute to the NADP(+) site. Tyr182 is an active-site residue.

This sequence belongs to the short-chain dehydrogenases/reductases (SDR) family.

It catalyses the reaction (S)-8-oxocitronellyl enol + NADP(+) = (6E)-8-oxogeranial + NADPH + H(+). The catalysed reaction is (S)-8-oxocitronellyl enol + NAD(+) = (6E)-8-oxogeranial + NADH + H(+). Its function is as follows. Iridoid synthase that catalyzes the first step in generation of the iridoid ring scaffold using the linear monoterpene (6E)-8-oxogeranial as substrate. Iridoids comprise a large family of distinctive bicyclic monoterpenes that possess a wide range of pharmacological activities, including anticancer, anti-inflammatory, antifungal and antibacterial activities. Catalyzes the conversion of the linear monoterpene (6E)-8-oxogeranial to (S)-8-oxocitronellyl enol, a precursor of nepetalactones, which are metabolites that are both insect-repellent and have euphoric effect in cats. The chain is (S)-8-oxocitronellyl enol synthase ISY2 from Nepeta racemosa (Catmint).